A 307-amino-acid polypeptide reads, in one-letter code: MMLQGAGLGYRRDLAEDFLLLPDNSVVNFMEVAPENWIKMGGAARYKFDQAAERFPLAVHGLSLSLGGQAPLDKALLQGIKALMTQYQAVFFSEHLSYCECDGHLYDLLPMPFTEEAVKHVAQRIREVQDFLGMQISLENTSYYLHSPTSTMNEVEFLNAIAQEANCGIHLDVNNIYVNGVNHGLLNPYVFLDHVDVSRVNYIHIAGHDEEHGAANPISPSDEAFNKIKGEYRHLPQLLVDTHGEAVKSNVWDLLEYAYQRLPHIPPTLLERDFNFPPFAELYAEVEHIAQLQQKHAKLTVENRHAA.

It belongs to the UPF0276 family.

This is UPF0276 protein PM0211 from Pasteurella multocida (strain Pm70).